A 409-amino-acid chain; its full sequence is Elongation factor Tu, chloroplastic (409 aa).

Residues 10-214 (KPHVNIGTIG…AVDEYIPTPE (205 aa)) enclose the tr-type G domain. The G1 stretch occupies residues 19–26 (GHVDHGKT). 19–26 (GHVDHGKT) serves as a coordination point for GTP. Threonine 26 serves as a coordination point for Mg(2+). Residues 60–64 (GITIN) form a G2 region. A G3 region spans residues 81–84 (DCPG). GTP contacts are provided by residues 81–85 (DCPGH) and 136–139 (NKED). Residues 136 to 139 (NKED) are G4. A G5 region spans residues 174 to 176 (SAL).

It belongs to the TRAFAC class translation factor GTPase superfamily. Classic translation factor GTPase family. EF-Tu/EF-1A subfamily.

It is found in the plastid. It localises to the chloroplast. It catalyses the reaction GTP + H2O = GDP + phosphate + H(+). Functionally, GTP hydrolase that promotes the GTP-dependent binding of aminoacyl-tRNA to the A-site of ribosomes during protein biosynthesis. In Phaeodactylum tricornutum (strain CCAP 1055/1), this protein is Elongation factor Tu, chloroplastic (tufA).